Reading from the N-terminus, the 265-residue chain is 3-methyl-2-oxobutanoate hydroxymethyltransferase (265 aa).

The Mg(2+) site is built by Asp-45 and Asp-84. Residues 45–46 (DS), Asp-84, and Lys-112 contribute to the 3-methyl-2-oxobutanoate site. Glu-114 contributes to the Mg(2+) binding site. Glu-181 functions as the Proton acceptor in the catalytic mechanism.

It belongs to the PanB family. In terms of assembly, homodecamer; pentamer of dimers. Requires Mg(2+) as cofactor.

The protein localises to the cytoplasm. It catalyses the reaction 3-methyl-2-oxobutanoate + (6R)-5,10-methylene-5,6,7,8-tetrahydrofolate + H2O = 2-dehydropantoate + (6S)-5,6,7,8-tetrahydrofolate. It participates in cofactor biosynthesis; (R)-pantothenate biosynthesis; (R)-pantoate from 3-methyl-2-oxobutanoate: step 1/2. In terms of biological role, catalyzes the reversible reaction in which hydroxymethyl group from 5,10-methylenetetrahydrofolate is transferred onto alpha-ketoisovalerate to form ketopantoate. The polypeptide is 3-methyl-2-oxobutanoate hydroxymethyltransferase (Yersinia pseudotuberculosis serotype IB (strain PB1/+)).